We begin with the raw amino-acid sequence, 274 residues long: Type III pantothenate kinase (274 aa).

Aspartate 6 to valine 13 is a binding site for ATP. Glycine 109–arginine 112 lines the substrate pocket. Catalysis depends on aspartate 111, which acts as the Proton acceptor. Aspartate 131 is a binding site for K(+). Serine 134 lines the ATP pocket. Threonine 186 is a substrate binding site.

It belongs to the type III pantothenate kinase family. As to quaternary structure, homodimer. NH4(+) is required as a cofactor. It depends on K(+) as a cofactor.

It localises to the cytoplasm. The catalysed reaction is (R)-pantothenate + ATP = (R)-4'-phosphopantothenate + ADP + H(+). Its pathway is cofactor biosynthesis; coenzyme A biosynthesis; CoA from (R)-pantothenate: step 1/5. Functionally, catalyzes the phosphorylation of pantothenate (Pan), the first step in CoA biosynthesis. This Mycobacterium leprae (strain Br4923) protein is Type III pantothenate kinase.